The following is a 309-amino-acid chain: Homoserine kinase (309 aa).

91 to 101 provides a ligand contact to ATP; that stretch reads PIGSGLGSSAC.

The protein belongs to the GHMP kinase family. Homoserine kinase subfamily.

It localises to the cytoplasm. The enzyme catalyses L-homoserine + ATP = O-phospho-L-homoserine + ADP + H(+). Its pathway is amino-acid biosynthesis; L-threonine biosynthesis; L-threonine from L-aspartate: step 4/5. Its function is as follows. Catalyzes the ATP-dependent phosphorylation of L-homoserine to L-homoserine phosphate. The chain is Homoserine kinase from Cronobacter sakazakii (strain ATCC BAA-894) (Enterobacter sakazakii).